The primary structure comprises 260 residues: Opacity protein opA58 (260 aa).

The first 23 residues, 1-23 (MNPAPKKPSLLFSSLLFSSAAQA), serve as a signal peptide directing secretion.

This sequence belongs to the opacity porin family.

The protein localises to the cell outer membrane. Implicated in a number of adherence functions. OPA proteins are implicated in pathogenesis and are subject to phase variation. The sequence is that of Opacity protein opA58 (opaJ) from Neisseria gonorrhoeae.